A 350-amino-acid chain; its full sequence is Protein FAM118B (350 aa).

Alanine 2 is subject to N-acetylalanine. The residue at position 9 (serine 9) is a Phosphoserine. Positions 330–350 are disordered; sequence AREGQLNGSSAAHGEIRGCST.

The protein belongs to the FAM118 family.

The protein localises to the nucleus. The protein resides in the cajal body. In terms of biological role, may play a role in Cajal bodies formation. The chain is Protein FAM118B (Fam118b) from Rattus norvegicus (Rat).